Here is a 413-residue protein sequence, read N- to C-terminus: Scarecrow-like protein 21 (413 aa).

The region spanning 41 to 413 (IVEAISRGDL…RILVSSCAWK (373 aa)) is the GRAS domain. The segment at 48–108 (GDLKLVLVAC…VARLAASGSS (61 aa)) is leucine repeat I (LRI). The tract at residues 127–192 (VYVLHEVCPY…GGAPNIRITG (66 aa)) is VHIID. The VHIID signature appears at 158–162 (IHIID). The interval 201–233 (TVKKRLEKLAKKFDVPFRFNAVSRPSCEVEVEN) is leucine repeat II (LRII). Positions 242–336 (LGVNFAYMLH…QHCMARDVVN (95 aa)) are PFYRE. The tract at residues 339-413 (ACEGAERIER…RILVSSCAWK (75 aa)) is SAW.

The protein belongs to the GRAS family. In terms of assembly, interacts with Meloidogyne incognita 16D10. In terms of tissue distribution, expressed in seedlings, roots, cotyledons, leaves and flowers.

It localises to the nucleus. Its function is as follows. Probable transcription factor involved in plant development. The polypeptide is Scarecrow-like protein 21 (SCL21) (Arabidopsis thaliana (Mouse-ear cress)).